The following is a 240-amino-acid chain: 6-phosphogluconolactonase (240 aa).

The protein belongs to the glucosamine/galactosamine-6-phosphate isomerase family. 6-phosphogluconolactonase subfamily.

The enzyme catalyses 6-phospho-D-glucono-1,5-lactone + H2O = 6-phospho-D-gluconate + H(+). The protein operates within carbohydrate degradation; pentose phosphate pathway; D-ribulose 5-phosphate from D-glucose 6-phosphate (oxidative stage): step 2/3. In terms of biological role, hydrolysis of 6-phosphogluconolactone to 6-phosphogluconate. The sequence is that of 6-phosphogluconolactonase (pgl) from Nostoc sp. (strain PCC 7120 / SAG 25.82 / UTEX 2576).